Here is a 236-residue protein sequence, read N- to C-terminus: Acetate--CoA ligase [ADP-forming] II subunit beta (236 aa).

The ATP-grasp domain maps to 26–62; that stretch reads KQVLKAYGLPVPEEKLAKTLDEALKYAEEIGYPVAMK. 52–63 lines the ATP pocket; it reads AEEIGYPVAMKL.

It belongs to the acetate CoA ligase beta subunit family. Heterotetramer of two alpha and two beta subunits.

It catalyses the reaction acetate + ATP + CoA = acetyl-CoA + ADP + phosphate. Functionally, catalyzes the reversible formation of acetate and ATP from acetyl-CoA by using ADP and phosphate. Can use other substrates such as phenylacetyl-CoA, indoleacetyl-CoA and isobutyryl-CoA, but not succinyl-CoA. Seems to be involved primarily in the degradation of aryl-CoA esters to the corresponding acids. Participates in the conversion of acetyl-CoA to acetate and in the degradation of branched-chain amino acids via branched-chain-acyl-CoA esters. In Pyrococcus furiosus (strain ATCC 43587 / DSM 3638 / JCM 8422 / Vc1), this protein is Acetate--CoA ligase [ADP-forming] II subunit beta.